A 510-amino-acid polypeptide reads, in one-letter code: Putative thymidine phosphorylase (510 aa).

This sequence belongs to the thymidine/pyrimidine-nucleoside phosphorylase family. Type 2 subfamily.

It catalyses the reaction thymidine + phosphate = 2-deoxy-alpha-D-ribose 1-phosphate + thymine. In Nitrobacter hamburgensis (strain DSM 10229 / NCIMB 13809 / X14), this protein is Putative thymidine phosphorylase.